The following is a 49-amino-acid chain: Lectin alpha chain (49 aa).

Belongs to the leguminous lectin family. Homotetramer. Post-translationally, the beta and gamma chains are produced by partial proteolytic processing of the lectin alpha chain by an asparaginyl endopeptidase. Mixture of 60% alpha lectin and 40% of its beta and gamma proteolytic fragments. In terms of tissue distribution, seed.

Functionally, D-mannose/D-glucose-binding lectin. This chain is Lectin alpha chain, found in Dioclea violacea.